Consider the following 445-residue polypeptide: N-succinylarginine dihydrolase (445 aa).

Substrate contacts are provided by residues 19 to 28 (AGLSFGNVAS), N110, and 137 to 138 (HR). E174 is an active-site residue. R214 is a binding site for substrate. H250 is an active-site residue. Residues D252 and N363 each contribute to the substrate site. The active-site Nucleophile is the C369.

The protein belongs to the succinylarginine dihydrolase family. As to quaternary structure, homodimer.

The enzyme catalyses N(2)-succinyl-L-arginine + 2 H2O + 2 H(+) = N(2)-succinyl-L-ornithine + 2 NH4(+) + CO2. The protein operates within amino-acid degradation; L-arginine degradation via AST pathway; L-glutamate and succinate from L-arginine: step 2/5. Its function is as follows. Catalyzes the hydrolysis of N(2)-succinylarginine into N(2)-succinylornithine, ammonia and CO(2). The polypeptide is N-succinylarginine dihydrolase (Shewanella halifaxensis (strain HAW-EB4)).